The primary structure comprises 262 residues: Orotidine 5'-phosphate decarboxylase (262 aa).

Residues Asp-35, 57–59, 89–98, Tyr-215, and Arg-233 contribute to the substrate site; these read KTH and DRKFADIGNT. The active-site Proton donor is the Lys-91.

This sequence belongs to the OMP decarboxylase family.

The catalysed reaction is orotidine 5'-phosphate + H(+) = UMP + CO2. Its pathway is pyrimidine metabolism; UMP biosynthesis via de novo pathway; UMP from orotate: step 2/2. The polypeptide is Orotidine 5'-phosphate decarboxylase (URA3) (Pichia kudriavzevii (Yeast)).